The primary structure comprises 39 residues: Large ribosomal subunit protein bL36 (39 aa).

This sequence belongs to the bacterial ribosomal protein bL36 family.

The chain is Large ribosomal subunit protein bL36 from Oenococcus oeni (strain ATCC BAA-331 / PSU-1).